A 356-amino-acid polypeptide reads, in one-letter code: D-alanine--D-alanine ligase (356 aa).

The ATP-grasp domain occupies 134–339 (KQLFEHRGLP…YPELITKLIE (206 aa)). 167–222 (NDKLNYPVFVKPANLGSSVGISKCNNEAELKEGIKEAFQFDRKLVIEQGVNAREIE) is an ATP binding site. Residues Asp293, Glu306, and Asn308 each coordinate Mg(2+).

This sequence belongs to the D-alanine--D-alanine ligase family. Requires Mg(2+) as cofactor. Mn(2+) is required as a cofactor.

The protein resides in the cytoplasm. The enzyme catalyses 2 D-alanine + ATP = D-alanyl-D-alanine + ADP + phosphate + H(+). The protein operates within cell wall biogenesis; peptidoglycan biosynthesis. Its function is as follows. Cell wall formation. The sequence is that of D-alanine--D-alanine ligase from Staphylococcus aureus (strain MSSA476).